Here is a 469-residue protein sequence, read N- to C-terminus: MTAQTLYDKLWNNHVVREEEDGTVLLYIDRHLVHEVTSPQAFEGLKMAGRKLWRIDSVVSTADHNTPTGDWDKGIQDPISKLQVDILDKNIKEFGALAYFPFMDKGQGIVHVMGPEQGATLPGMTVVCGDSHTSTHGAFGALAHGIGTSEVEHTMATQCITAKKSKSMLIAVDGKLKAGVTAKDVALYIIGQIGTAGGTGYAIEFGGEAIRSLSMEGRMTLCNMAIEAGARSGMVAVDQTTIDYVKDKPFAPKGEAWDKAVEYWRTLVSDEGAVFDKEYRFNAEDIEPQVTWGTSPEMVLDISSKVPNPAEETDPVKRSGMERALEYMGLEAGTPLNEIPVDIVFIGSCTNSRIEDLREAAAIAKDRKKAANVQRVLIVPGSGLVKEQAEKEGLDKIFIEAGFEWREPGCSMCLAMNADRLTPGQRCASTSNRNFEGRQGNGGRTHLVSPAMAAAAAVTGRFTDIRMMA.

[4Fe-4S] cluster-binding residues include C349, C410, and C413.

This sequence belongs to the aconitase/IPM isomerase family. LeuC type 1 subfamily. As to quaternary structure, heterodimer of LeuC and LeuD. The cofactor is [4Fe-4S] cluster.

The enzyme catalyses (2R,3S)-3-isopropylmalate = (2S)-2-isopropylmalate. It participates in amino-acid biosynthesis; L-leucine biosynthesis; L-leucine from 3-methyl-2-oxobutanoate: step 2/4. In terms of biological role, catalyzes the isomerization between 2-isopropylmalate and 3-isopropylmalate, via the formation of 2-isopropylmaleate. The sequence is that of 3-isopropylmalate dehydratase large subunit from Neisseria meningitidis serogroup C (strain 053442).